Here is a 280-residue protein sequence, read N- to C-terminus: CAG pathogenicity island protein 12 (280 aa).

A signal peptide spans 1 to 20 (MKLRASVLIGATILCLILSA). A lipid anchor (N-palmitoyl cysteine) is attached at cysteine 21. Residue cysteine 21 is the site of S-diacylglycerol cysteine attachment.

It localises to the cell membrane. In Helicobacter pylori (strain ATCC 700392 / 26695) (Campylobacter pylori), this protein is CAG pathogenicity island protein 12 (cagT).